Reading from the N-terminus, the 173-residue chain is 16S rRNA aminocarboxypropyltransferase (173 aa).

4 residues coordinate S-adenosyl-L-methionine: Thr25, Leu72, Leu96, and Ser115.

It belongs to the TDD superfamily. TSR3 family.

Its subcellular location is the cytoplasm. It carries out the reaction an N(1)-methylpseudouridine in rRNA + S-adenosyl-L-methionine = N(1)-methyl-N(3)-[(3S)-3-amino-3-carboxypropyl]pseudouridine in rRNA + S-methyl-5'-thioadenosine + H(+). In terms of biological role, aminocarboxypropyltransferase that catalyzes the aminocarboxypropyl transfer on pseudouridine corresponding to position 914 in M.jannaschii 16S rRNA. It constitutes the last step in biosynthesis of the hypermodified N1-methyl-N3-(3-amino-3-carboxypropyl) pseudouridine (m1acp3-Psi). The protein is 16S rRNA aminocarboxypropyltransferase of Methanococcoides burtonii (strain DSM 6242 / NBRC 107633 / OCM 468 / ACE-M).